Here is a 180-residue protein sequence, read N- to C-terminus: UPF0227 protein Ent638_1623 (180 aa).

It belongs to the UPF0227 family.

The polypeptide is UPF0227 protein Ent638_1623 (Enterobacter sp. (strain 638)).